Consider the following 249-residue polypeptide: MRAAVVYKTDGHVKRIEEALKRLEVEVELFNQPSEELENFDFIVSVGGDGTILRILQKLKRCPPIFGINTGRVGLLTHASPENFEVELKKAVEKFEVERFPRVSCSAMPDVLALNEIAVLSRKPAKMIDVALRVDGVEVDRIRCDGFIVATQIGSTGYAFSAGGPVVEPYLECFILIPIAPFRFGWKPYVVSMERKIEVIAEKAIVVADGQKSVDFDGEITIEKSEFPAVFFKNEKRFRNLFGKVRSIG.

The Proton acceptor role is filled by Asp-49. NAD(+) contacts are provided by residues 49–50 (DG), Arg-54, 115–116 (NE), Lys-126, Arg-143, Asp-145, Ile-153, 156–161 (TGYAFS), Ala-180, and Gln-211.

It belongs to the NAD kinase family. As to quaternary structure, homotetramer. Requires a divalent metal cation as cofactor.

Its subcellular location is the cytoplasm. The enzyme catalyses NAD(+) + ATP = ADP + NADP(+) + H(+). Its function is as follows. Involved in the regulation of the intracellular balance between NAD(H) and NADP(H), and is a key enzyme in the biosynthesis of NADP. Catalyzes specifically the phosphorylation on 2'-hydroxyl of the adenosine moiety of NAD to yield NADP. The chain is NAD kinase from Archaeoglobus fulgidus (strain ATCC 49558 / DSM 4304 / JCM 9628 / NBRC 100126 / VC-16).